Here is a 475-residue protein sequence, read N- to C-terminus: MEGLLTRCRTLSALATCSLRHSRCIVRKCYHCAPGRGQRLVVSRMFQPQNLREDQVLSLEGRASDLTCKSQRLMLQVGLILPASPGCYHLMPYTVRAVEKLVRVIDQEMQAIGGQKINMPSLSPAELWRATGRWDLMGRELLRLKDRHGKEYCLGPTHEEAVTALVASQKKLSYKQLPLLLYQVTRKFRDEPRPRFGLLRGREFYMKDMYTFDSSSEAAQETYSLVCDAYCRLFDRLGLRWMKARADVGSIGGTMSHEFQLPVDIGEDRLVVCPSCHFSANTEIVDLSQKICPDCQGPLTETKGIEVGHTFYLGTKYSSIFNAHFTNAHGESLLAEMGCYGLGVTRILAAAIEVLSTEDCIRWPSLLAPYQVCIIPPKKGSKEAAATEIVERLYDDVTEALPQLRGEVLLDDRTHLTIGNRLKDANKLGYPFVIIASKRALEDPAHFEVWSQNTGEVVFLTKEGVMELLTGVHVV.

Residues 1–29 constitute a mitochondrion transit peptide; that stretch reads MEGLLTRCRTLSALATCSLRHSRCIVRKC.

It belongs to the class-II aminoacyl-tRNA synthetase family.

The protein resides in the mitochondrion matrix. It catalyses the reaction tRNA(Pro) + L-proline + ATP = L-prolyl-tRNA(Pro) + AMP + diphosphate. Its function is as follows. Mitochondrial aminoacyl-tRNA synthetase that catalyzes the specific attachment of the proline amino acid (aa) to the homologous transfer RNA (tRNA), further participating in protein synthesis. The reaction occurs in a two steps: proline is first activated by ATP to form Pro-AMP and then transferred to the acceptor end of tRNA(Pro). This Rattus norvegicus (Rat) protein is Probable proline--tRNA ligase, mitochondrial (Pars2).